A 410-amino-acid polypeptide reads, in one-letter code: Multifunctional CCA protein (410 aa).

ATP contacts are provided by Gly-8 and Arg-11. 2 residues coordinate CTP: Gly-8 and Arg-11. Residues Glu-21 and Asp-23 each contribute to the Mg(2+) site. Residues Arg-91, Arg-137, and Arg-140 each contribute to the ATP site. The CTP site is built by Arg-91, Arg-137, and Arg-140. Residues 228-329 (TGVHVLSVLR…LELLQRFDVF (102 aa)) enclose the HD domain.

It belongs to the tRNA nucleotidyltransferase/poly(A) polymerase family. Bacterial CCA-adding enzyme type 1 subfamily. As to quaternary structure, monomer. Can also form homodimers and oligomers. The cofactor is Mg(2+). Ni(2+) is required as a cofactor.

It catalyses the reaction a tRNA precursor + 2 CTP + ATP = a tRNA with a 3' CCA end + 3 diphosphate. It carries out the reaction a tRNA with a 3' CCA end + 2 CTP + ATP = a tRNA with a 3' CCACCA end + 3 diphosphate. Functionally, catalyzes the addition and repair of the essential 3'-terminal CCA sequence in tRNAs without using a nucleic acid template. Adds these three nucleotides in the order of C, C, and A to the tRNA nucleotide-73, using CTP and ATP as substrates and producing inorganic pyrophosphate. tRNA 3'-terminal CCA addition is required both for tRNA processing and repair. Also involved in tRNA surveillance by mediating tandem CCA addition to generate a CCACCA at the 3' terminus of unstable tRNAs. While stable tRNAs receive only 3'-terminal CCA, unstable tRNAs are marked with CCACCA and rapidly degraded. The sequence is that of Multifunctional CCA protein from Ectopseudomonas mendocina (strain ymp) (Pseudomonas mendocina).